A 312-amino-acid polypeptide reads, in one-letter code: MDIIFYHPTFDTPYWINALTAALPGARVREWKRGDNEHADYALVWHPPVEMLQGRDLKAVFALGAGVDSILSKLKAHPEMLPEHIPLFRLEDTGMGQQMQEYAVSQVLHWFRRFDDYQALKQKSHWEPLADYQREDFTIGILGAGVLGSKVAEALAPWGFPLRCWSRSRKTYPGVQSFAGADELPAFLKGTRVLINLLPNTAETVGIINKGLLNQLADESYLMNLARGVHVIEEDLIDALNTGKLKGAMLDVYSSEPLPVESPLWAHPRVAMTPHIAAVTRPAEAVAYIARTIEHLEQGKAATRQVNRQLGY.

Arginine 227 is a catalytic residue. Histidine 275 (proton donor) is an active-site residue.

This sequence belongs to the D-isomer specific 2-hydroxyacid dehydrogenase family. GhrA subfamily.

It is found in the cytoplasm. The enzyme catalyses glycolate + NADP(+) = glyoxylate + NADPH + H(+). The catalysed reaction is (R)-glycerate + NAD(+) = 3-hydroxypyruvate + NADH + H(+). It carries out the reaction (R)-glycerate + NADP(+) = 3-hydroxypyruvate + NADPH + H(+). Its function is as follows. Catalyzes the NADPH-dependent reduction of glyoxylate and hydroxypyruvate into glycolate and glycerate, respectively. The protein is Glyoxylate/hydroxypyruvate reductase A of Enterobacter sp. (strain 638).